We begin with the raw amino-acid sequence, 219 residues long: Lipoprotein-releasing system ATP-binding protein LolD (219 aa).

An ABC transporter domain is found at 5–219; sequence LKAGDIFKTY…KVVMQDGVII (215 aa). Residue 37–44 participates in ATP binding; sequence GASGAGKS.

Belongs to the ABC transporter superfamily. Lipoprotein translocase (TC 3.A.1.125) family. In terms of assembly, the complex is composed of two ATP-binding proteins (LolD) and two transmembrane proteins (LolC and LolE).

Its subcellular location is the cell inner membrane. Part of the ABC transporter complex LolCDE involved in the translocation of mature outer membrane-directed lipoproteins, from the inner membrane to the periplasmic chaperone, LolA. Responsible for the formation of the LolA-lipoprotein complex in an ATP-dependent manner. The sequence is that of Lipoprotein-releasing system ATP-binding protein LolD from Cytophaga hutchinsonii (strain ATCC 33406 / DSM 1761 / CIP 103989 / NBRC 15051 / NCIMB 9469 / D465).